A 314-amino-acid polypeptide reads, in one-letter code: MVENSSSNNSTRPIPAIPMDLPDYEALPTHAPLYHQLIAGAFAGIMEHSVMFPIDALKTRIQSANAKSLSAKNMLSQISHISTSEGTLALWKGVQSVILGAGPAHAVYFGTYEFCKKNLIDSSDTQTHHPFKTAISGACATTASDALMNPFDTIKQRIQLNTSASVWQTTKQIYQSEGLAAFYYSYPTTLVMNIPFAAFNFVIYESSTKFLNPSNEYNPLIHCLCGSISGSTCAAITTPLDCIKTVLQIRGSQTVSLEIMRKADTFSKAASAIYQVYGWKGFWRGWKPRIVANMPATAISWTAYECAKHFLMTY.

Solcar repeat units lie at residues 31–118 (APLY…CKKN), 128–210 (HHPF…STKF), and 217–310 (YNPL…AKHF). 6 helical membrane-spanning segments follow: residues 33–52 (LYHQ…SVMF), 93–112 (GVQS…FGTY), 130–149 (PFKT…ALMN), 185–204 (SYPT…FVIY), 219–238 (PLIH…AITT), and 285–298 (GWKP…PATA).

This sequence belongs to the mitochondrial carrier (TC 2.A.29) family.

It is found in the mitochondrion inner membrane. In terms of biological role, MRS3 suppresses a mitochondrial splice defect in the first intron of the COB gene. It may act as a carrier, exerting its suppressor activity via modulation of solute concentrations in the mitochondrion (possibly of cations). The sequence is that of Mitochondrial RNA-splicing protein MRS3 (MRS3) from Saccharomyces cerevisiae (strain ATCC 204508 / S288c) (Baker's yeast).